The following is a 207-amino-acid chain: Large ribosomal subunit protein uL4 (207 aa).

Positions 58–78 (AGGGKKPWRQKGTGRARHGSI) are disordered. Residues 63–77 (KPWRQKGTGRARHGS) show a composition bias toward basic residues.

It belongs to the universal ribosomal protein uL4 family. In terms of assembly, part of the 50S ribosomal subunit.

In terms of biological role, one of the primary rRNA binding proteins, this protein initially binds near the 5'-end of the 23S rRNA. It is important during the early stages of 50S assembly. It makes multiple contacts with different domains of the 23S rRNA in the assembled 50S subunit and ribosome. Forms part of the polypeptide exit tunnel. This Aster yellows witches'-broom phytoplasma (strain AYWB) protein is Large ribosomal subunit protein uL4.